Consider the following 211-residue polypeptide: Peptide methionine sulfoxide reductase MsrA (211 aa).

Cys-52 is a catalytic residue.

It belongs to the MsrA Met sulfoxide reductase family.

The enzyme catalyses L-methionyl-[protein] + [thioredoxin]-disulfide + H2O = L-methionyl-(S)-S-oxide-[protein] + [thioredoxin]-dithiol. It carries out the reaction [thioredoxin]-disulfide + L-methionine + H2O = L-methionine (S)-S-oxide + [thioredoxin]-dithiol. Its function is as follows. Has an important function as a repair enzyme for proteins that have been inactivated by oxidation. Catalyzes the reversible oxidation-reduction of methionine sulfoxide in proteins to methionine. This Klebsiella pneumoniae (strain 342) protein is Peptide methionine sulfoxide reductase MsrA.